Reading from the N-terminus, the 287-residue chain is Uroporphyrinogen-III C-methyltransferase (287 aa).

A compositionally biased stretch (polar residues) spans 1–10 (MAGKTVTNGA). The disordered stretch occupies residues 1-24 (MAGKTVTNGAAQGKAARSGADGAV). Residues P40, 116-118 (GGD), T146, and M199 contribute to the S-adenosyl-L-methionine site.

This sequence belongs to the precorrin methyltransferase family.

The enzyme catalyses uroporphyrinogen III + 2 S-adenosyl-L-methionine = precorrin-2 + 2 S-adenosyl-L-homocysteine + H(+). Its pathway is porphyrin-containing compound metabolism; siroheme biosynthesis; precorrin-2 from uroporphyrinogen III: step 1/1. Its function is as follows. Catalyzes the methylation of both C-2 and C-7 of uroporphyrinogen III leading to precorrin-1 and precorrin-2; their oxidative esterification gives respectively factor I octamethyl ester and sirohydrochlorin. Inactivation of uroporphyrinogen-III methyltransferase results in the loss of nitrite and nitric oxide reductase activities, but not of nitrous oxide reductase activity. Likely involved in heme D1 biosynthesis. This chain is Uroporphyrinogen-III C-methyltransferase (nirE), found in Paracoccus denitrificans (strain Pd 1222).